We begin with the raw amino-acid sequence, 257 residues long: Putative B3 domain-containing protein At2g27410 (257 aa).

Residues 5–50 (ARTTKINHFRGTSTTQNPNRGLEPSPSSYVTRRSKEKRPINVEKRS) form a disordered region. Residues 8–35 (TKINHFRGTSTTQNPNRGLEPSPSSYVT) show a composition bias toward polar residues. The TF-B3 DNA-binding region spans 115 to 209 (TPDFLTEDET…KLCFALTPKN (95 aa)). The tract at residues 212 to 257 (RGNSLPGGDGASTSGESGQVPLPIPPARYSSNSGQGCSGESSSSSS) is disordered. Low complexity predominate over residues 241 to 257 (SSNSGQGCSGESSSSSS).

The protein localises to the nucleus. The protein is Putative B3 domain-containing protein At2g27410 of Arabidopsis thaliana (Mouse-ear cress).